Consider the following 382-residue polypeptide: Alkane 1-monooxygenase 2 (382 aa).

4 helical membrane passes run 17–37, 45–65, 88–108, and 114–134; these read GYLA…FVGV, WAWF…YLVG, VSAI…GHIF, and GLLG…IIAI. The Fe cation site is built by His138, His142, His168, His172, and His173. A helical transmembrane segment spans residues 236 to 256; sequence ALFAATFGLLWGWQGVVFFLG. 3 residues coordinate Fe cation: His312, His315, and His316.

It belongs to the fatty acid desaturase type 1 family. AlkB subfamily. The cofactor is Fe(3+).

The protein resides in the cell inner membrane. The catalysed reaction is octane + 2 reduced [rubredoxin] + O2 + 2 H(+) = 2 oxidized [rubredoxin] + octan-1-ol + H2O. Its pathway is hydrocarbon metabolism; alkane degradation. Its function is as follows. Catalyzes the hydroxylation of n-alkanes in the presence of a NADH-rubredoxin reductase and rubredoxin. It preferably hydroxylases C8-C16 hydrocarbons. This is Alkane 1-monooxygenase 2 (alkB2) from Alcanivorax borkumensis (strain ATCC 700651 / DSM 11573 / NCIMB 13689 / SK2).